The sequence spans 204 residues: Holliday junction branch migration complex subunit RuvA (204 aa).

Residues 1–67 (MIAFLSGHLV…ETELVLYGFG (67 aa)) are domain I. The segment at 68-146 (SPAERDVFVE…HWRQGLENAD (79 aa)) is domain II. The interval 147–156 (RPLAGGPPPA) is flexible linker. The domain III stretch occupies residues 156-204 (AIREEVEMALLALGYSLQEIQAALQALPSQPRPTEEWLRDAITYLSRQP).

The protein belongs to the RuvA family. As to quaternary structure, homotetramer. Forms an RuvA(8)-RuvB(12)-Holliday junction (HJ) complex. HJ DNA is sandwiched between 2 RuvA tetramers; dsDNA enters through RuvA and exits via RuvB. An RuvB hexamer assembles on each DNA strand where it exits the tetramer. Each RuvB hexamer is contacted by two RuvA subunits (via domain III) on 2 adjacent RuvB subunits; this complex drives branch migration. In the full resolvosome a probable DNA-RuvA(4)-RuvB(12)-RuvC(2) complex forms which resolves the HJ.

It is found in the cytoplasm. Its function is as follows. The RuvA-RuvB-RuvC complex processes Holliday junction (HJ) DNA during genetic recombination and DNA repair, while the RuvA-RuvB complex plays an important role in the rescue of blocked DNA replication forks via replication fork reversal (RFR). RuvA specifically binds to HJ cruciform DNA, conferring on it an open structure. The RuvB hexamer acts as an ATP-dependent pump, pulling dsDNA into and through the RuvAB complex. HJ branch migration allows RuvC to scan DNA until it finds its consensus sequence, where it cleaves and resolves the cruciform DNA. This is Holliday junction branch migration complex subunit RuvA from Synechococcus sp. (strain JA-3-3Ab) (Cyanobacteria bacterium Yellowstone A-Prime).